We begin with the raw amino-acid sequence, 203 residues long: Putative archaetidylserine decarboxylase proenzyme (203 aa).

The active-site Schiff-base intermediate with substrate; via pyruvic acid is S171. The residue at position 171 (S171) is a Pyruvic acid (Ser); by autocatalysis.

It belongs to the phosphatidylserine decarboxylase family. PSD-A subfamily. In terms of assembly, heterodimer of a large membrane-associated beta subunit and a small pyruvoyl-containing alpha subunit. Pyruvate is required as a cofactor. Is synthesized initially as an inactive proenzyme. Formation of the active enzyme involves a self-maturation process in which the active site pyruvoyl group is generated from an internal serine residue via an autocatalytic post-translational modification. Two non-identical subunits are generated from the proenzyme in this reaction, and the pyruvate is formed at the N-terminus of the alpha chain, which is derived from the carboxyl end of the proenzyme. The post-translation cleavage follows an unusual pathway, termed non-hydrolytic serinolysis, in which the side chain hydroxyl group of the serine supplies its oxygen atom to form the C-terminus of the beta chain, while the remainder of the serine residue undergoes an oxidative deamination to produce ammonia and the pyruvoyl prosthetic group on the alpha chain.

Its subcellular location is the cell membrane. The enzyme catalyses archaetidylserine + H(+) = archaetidylethanolamine + CO2. Catalyzes the formation of archaetidylethanolamine (PtdEtn) from archaetidylserine (PtdSer). This Methanosarcina barkeri (strain Fusaro / DSM 804) protein is Putative archaetidylserine decarboxylase proenzyme.